The primary structure comprises 286 residues: Shikimate dehydrogenase (NADP(+)) (286 aa).

Residues 22–24 (SRS) and T71 contribute to the shikimate site. K75 serves as the catalytic Proton acceptor. E87 is an NADP(+) binding site. N96 and D111 together coordinate shikimate. NADP(+)-binding positions include 136–140 (GAGGA), 160–165 (NRTPER), and I225. Position 227 (Y227) interacts with shikimate. G248 serves as a coordination point for NADP(+).

The protein belongs to the shikimate dehydrogenase family. Homodimer.

The catalysed reaction is shikimate + NADP(+) = 3-dehydroshikimate + NADPH + H(+). The protein operates within metabolic intermediate biosynthesis; chorismate biosynthesis; chorismate from D-erythrose 4-phosphate and phosphoenolpyruvate: step 4/7. Functionally, involved in the biosynthesis of the chorismate, which leads to the biosynthesis of aromatic amino acids. Catalyzes the reversible NADPH linked reduction of 3-dehydroshikimate (DHSA) to yield shikimate (SA). The chain is Shikimate dehydrogenase (NADP(+)) from Sinorhizobium medicae (strain WSM419) (Ensifer medicae).